The sequence spans 137 residues: Putative pre-16S rRNA nuclease (137 aa).

It belongs to the YqgF nuclease family.

It localises to the cytoplasm. Could be a nuclease involved in processing of the 5'-end of pre-16S rRNA. This chain is Putative pre-16S rRNA nuclease, found in Anaeromyxobacter sp. (strain Fw109-5).